The sequence spans 1046 residues: Piwi-like protein 2 (1046 aa).

A compositionally biased stretch (pro residues) spans 1–12 (MDPKRPTFPSPP). The segment at 1 to 35 (MDPKRPTFPSPPGVIRAPWQQSTEDQSQLLDQPSL) is disordered. Over residues 19–31 (WQQSTEDQSQLLD) the composition is skewed to polar residues. The 114-residue stretch at 462-575 (SVLDVMNLIY…LLPELSFMTG (114 aa)) folds into the PAZ domain. A Piwi domain is found at 741 to 1032 (LVVCIMTGNR…LAFLSGQYLH (292 aa)). Catalysis depends on residues aspartate 818, glutamate 856, aspartate 888, and histidine 1021.

Belongs to the argonaute family. Piwi subfamily. As to quaternary structure, component of the PET complex. Mg(2+) serves as cofactor. Methylated on arginine residues; required for the interaction with Tudor domain-containing protein and subsequent localization to the meiotic nuage, also named P granule. As to expression, detected in primordial germ cells (PGCs) from 3 dpf. In adult, it is found in both the female and male gonad. In the ovary, it is present in all stages of germ cell differentiation. In testis, it is present in mitotic and meiotic germ cells. No protein has been detected in the fully differentiated sperm cell.

The protein localises to the cytoplasm. It localises to the nucleus. In terms of biological role, endoribonuclease that plays a central role during spermatogenesis by repressing transposable elements and preventing their mobilization, which is essential for the germline integrity. Plays an essential role in germ cell differentiation and meiosis, independently of the function in transposable elements repression. Acts via the piRNA metabolic process, which mediates the repression of transposable elements during meiosis by forming complexes composed of piRNAs and Piwi proteins and govern the methylation and subsequent repression of transposons. During piRNA biosynthesis, plays a key role in the piRNA amplification loop, also named ping-pong amplification cycle, by acting as a 'slicer-competent' piRNA endoribonuclease that cleaves primary piRNAs, which are then loaded onto 'slicer-incompetent' piwil4. Piwil2 slicing produces a pre-miRNA intermediate, which is then processed in mature piRNAs, and as well as a 16 nucleotide by-product that is degraded. Required for piwil4/miwi2 nuclear localization and association with secondary piRNAs antisense. Represses circadian rhythms by promoting the stability and activity of core clock components BMAL1 and CLOCK. This is Piwi-like protein 2 (piwil2) from Danio rerio (Zebrafish).